We begin with the raw amino-acid sequence, 40 residues long: Mu-thomitoxin-Hme1b (40 aa).

3 disulfide bridges follow: cysteine 2/cysteine 18, cysteine 9/cysteine 22, and cysteine 17/cysteine 33.

It belongs to the neurotoxin 19 (CSTX) family. Contains 3 disulfide bonds. In terms of tissue distribution, expressed by the venom gland.

It localises to the secreted. Its function is as follows. Blocks the Nav1.2/SCN2A, Nav1.4/SCN4A, Nav1.5/SCN5A and Nav1.6/SCN8A sodium channels. Shows a slight preference for the Nav1.2 and Nav1.4 channels. Reduces the peak amplitude of the sodium current and negatively shifts the steady-state inactivation process. Does not shift the threshold potential of activation or the voltage corresponding to maximal current. Does not change the reversal potential of the sodium current. May act on site 1 of the receptor. The sequence is that of Mu-thomitoxin-Hme1b from Heriaeus mellotteei (Crab spider).